Reading from the N-terminus, the 312-residue chain is Glyoxylate/hydroxypyruvate reductase A (312 aa).

Residue Arg227 is part of the active site. His275 (proton donor) is an active-site residue.

It belongs to the D-isomer specific 2-hydroxyacid dehydrogenase family. GhrA subfamily.

It localises to the cytoplasm. It carries out the reaction glycolate + NADP(+) = glyoxylate + NADPH + H(+). The enzyme catalyses (R)-glycerate + NAD(+) = 3-hydroxypyruvate + NADH + H(+). The catalysed reaction is (R)-glycerate + NADP(+) = 3-hydroxypyruvate + NADPH + H(+). Catalyzes the NADPH-dependent reduction of glyoxylate and hydroxypyruvate into glycolate and glycerate, respectively. This Salmonella choleraesuis (strain SC-B67) protein is Glyoxylate/hydroxypyruvate reductase A.